Reading from the N-terminus, the 1155-residue chain is DNA-directed RNA polymerase subunit beta (1155 aa).

The protein belongs to the RNA polymerase beta chain family. In terms of assembly, the RNAP catalytic core consists of 2 alpha, 1 beta, 1 beta' and 1 omega subunit. When a sigma factor is associated with the core the holoenzyme is formed, which can initiate transcription.

The enzyme catalyses RNA(n) + a ribonucleoside 5'-triphosphate = RNA(n+1) + diphosphate. Functionally, DNA-dependent RNA polymerase catalyzes the transcription of DNA into RNA using the four ribonucleoside triphosphates as substrates. This is DNA-directed RNA polymerase subunit beta from Borrelia garinii subsp. bavariensis (strain ATCC BAA-2496 / DSM 23469 / PBi) (Borreliella bavariensis).